The primary structure comprises 81 residues: Photosystem I iron-sulfur center (81 aa).

4Fe-4S ferredoxin-type domains follow at residues 2–31 (SHTV…MVPW) and 37–68 (GQIA…VRVY). The [4Fe-4S] cluster site is built by Cys-11, Cys-14, Cys-17, Cys-21, Cys-48, Cys-51, Cys-54, and Cys-58.

The eukaryotic PSI reaction center is composed of at least 11 subunits. It depends on [4Fe-4S] cluster as a cofactor.

The protein resides in the plastid. It localises to the chloroplast thylakoid membrane. It carries out the reaction reduced [plastocyanin] + hnu + oxidized [2Fe-2S]-[ferredoxin] = oxidized [plastocyanin] + reduced [2Fe-2S]-[ferredoxin]. Functionally, apoprotein for the two 4Fe-4S centers FA and FB of photosystem I (PSI); essential for photochemical activity. FB is the terminal electron acceptor of PSI, donating electrons to ferredoxin. The C-terminus interacts with PsaA/B/D and helps assemble the protein into the PSI complex. Required for binding of PsaD and PsaE to PSI. PSI is a plastocyanin/cytochrome c6-ferredoxin oxidoreductase, converting photonic excitation into a charge separation, which transfers an electron from the donor P700 chlorophyll pair to the spectroscopically characterized acceptors A0, A1, FX, FA and FB in turn. This Thalassiosira pseudonana (Marine diatom) protein is Photosystem I iron-sulfur center.